Consider the following 315-residue polypeptide: DNA-directed RNA polymerase subunit alpha (315 aa).

An alpha N-terminal domain (alpha-NTD) region spans residues M1 to S228. An alpha C-terminal domain (alpha-CTD) region spans residues I238 to S315.

Belongs to the RNA polymerase alpha chain family. In cyanobacteria the RNAP catalytic core is composed of 2 alpha, 1 beta, 1 beta', 1 gamma and 1 omega subunit. When a sigma factor is associated with the core the holoenzyme is formed, which can initiate transcription.

The enzyme catalyses RNA(n) + a ribonucleoside 5'-triphosphate = RNA(n+1) + diphosphate. Its function is as follows. DNA-dependent RNA polymerase catalyzes the transcription of DNA into RNA using the four ribonucleoside triphosphates as substrates. The protein is DNA-directed RNA polymerase subunit alpha of Trichormus variabilis (strain ATCC 29413 / PCC 7937) (Anabaena variabilis).